Consider the following 466-residue polypeptide: Adenosylhomocysteinase (466 aa).

Thr-57, Asp-132, and Glu-192 together coordinate substrate. NAD(+) is bound at residue 193–195 (TTT). Positions 222 and 226 each coordinate substrate. Residues Asn-227, 256-261 (GYGDVG), Glu-279, Asn-314, 335-337 (IGH), and Asn-380 contribute to the NAD(+) site.

The protein belongs to the adenosylhomocysteinase family. It depends on NAD(+) as a cofactor.

It localises to the cytoplasm. It carries out the reaction S-adenosyl-L-homocysteine + H2O = L-homocysteine + adenosine. Its pathway is amino-acid biosynthesis; L-homocysteine biosynthesis; L-homocysteine from S-adenosyl-L-homocysteine: step 1/1. Its function is as follows. May play a key role in the regulation of the intracellular concentration of adenosylhomocysteine. The chain is Adenosylhomocysteinase from Sinorhizobium medicae (strain WSM419) (Ensifer medicae).